A 195-amino-acid polypeptide reads, in one-letter code: uncharacterized protein (195 aa).

Residues 86-158 are disordered; the sequence is LPSEGGWTSG…PAPVSGEPPE (73 aa).

This is an uncharacterized protein from Homo sapiens (Human).